The following is a 385-amino-acid chain: Telomere-binding protein subunit beta (385 aa).

Disordered stretches follow at residues 231 to 329 and 343 to 385; these read AADH…ALTT and WHEK…AAKK. The segment covering 242–262 has biased composition (basic residues); sequence GGAKGKGKAAAKAAKGKKLSA. A compositionally biased stretch (basic and acidic residues) spans 263–280; it reads KKGDSSAADVRKSVDKIV. 3 stretches are compositionally biased toward low complexity: residues 295–304, 312–326, and 365–375; these read KSQAPAAGKS, KAVP…KKSA, and GKASATSGKAS. Residues 376–385 show a composition bias toward basic residues; that stretch reads KASKKTAAKK.

Heterodimer of an alpha and a beta subunit.

The protein localises to the nucleus. It is found in the chromosome. The protein resides in the telomere. Functionally, may function as protective capping of the single-stranded telomeric overhang. May also participate in telomere length regulation during DNA replication. Binds specifically to the T4G4-containing extension on the 3'strand and protects this region of the telomere from nuclease digestion and chemical modification. In Sterkiella nova (Ciliate), this protein is Telomere-binding protein subunit beta (MAC-41A).